The primary structure comprises 398 residues: DNA-directed RNA polymerase III subunit RPC4 (398 aa).

The interval M1 to S105 is disordered. S2 carries the post-translational modification N-acetylserine. Residue S42 is modified to Phosphoserine. Basic and acidic residues predominate over residues K66 to P100. Glycyl lysine isopeptide (Lys-Gly) (interchain with G-Cter in SUMO2) cross-links involve residues K68 and K78. Residues R95, R97, and R99 each carry the omega-N-methylarginine modification. Glycyl lysine isopeptide (Lys-Gly) (interchain with G-Cter in SUMO2) cross-links involve residues K141, K152, K160, K190, K199, K206, K220, K285, and K302.

It belongs to the eukaryotic RPC4/POLR3D RNA polymerase subunit family. Component of the RNA polymerase III complex consisting of 17 subunits: a ten-subunit horseshoe-shaped catalytic core composed of POLR3A/RPC1, POLR3B/RPC2, POLR1C/RPAC1, POLR1D/RPAC2, POLR3K/RPC10, POLR2E/RPABC1, POLR2F/RPABC2, POLR2H/RPABC3, POLR2K/RPABC4 and POLR2L/RPABC5; a mobile stalk composed of two subunits POLR3H/RPC8 and CRCP/RPC9, protruding from the core and functioning primarily in transcription initiation; and additional subunits homologous to general transcription factors of the RNA polymerase II machinery, POLR3C/RPC3-POLR3F/RPC6-POLR3G/RPC7 heterotrimer required for transcription initiation and POLR3D/RPC4-POLR3E/RPC5 heterodimer involved in both transcription initiation and termination. Sumoylation on Lys-141 can serve as a signal to mark misfolded Pol III for proteasomal degradation.

It is found in the nucleus. In terms of biological role, DNA-dependent RNA polymerase catalyzes the transcription of DNA into RNA using the four ribonucleoside triphosphates as substrates. Specific peripheric component of RNA polymerase III (Pol III) which synthesizes small non-coding RNAs including 5S rRNA, snRNAs, tRNAs and miRNAs from at least 500 distinct genomic loci. Enables recruitment of Pol III at transcription initiation site and drives transcription initiation from both type 2 and type 3 DNA promoters. Required for efficient transcription termination and reinitiation. Pol III plays a key role in sensing and limiting infection by intracellular bacteria and DNA viruses. Acts as nuclear and cytosolic DNA sensor involved in innate immune response. Can sense non-self dsDNA that serves as template for transcription into dsRNA. The non-self RNA polymerase III transcripts, such as Epstein-Barr virus-encoded RNAs (EBERs) induce type I interferon and NF-kappa-B through the RIG-I pathway. The polypeptide is DNA-directed RNA polymerase III subunit RPC4 (POLR3D) (Bos taurus (Bovine)).